An 81-amino-acid chain; its full sequence is Small ribosomal subunit protein bS16 (81 aa).

The protein belongs to the bacterial ribosomal protein bS16 family.

The sequence is that of Small ribosomal subunit protein bS16 from Colwellia psychrerythraea (strain 34H / ATCC BAA-681) (Vibrio psychroerythus).